The following is a 252-amino-acid chain: Ciliogenesis and planar polarity effector 2 (252 aa).

The segment at 46–252 (QMNVDLVRYK…LRETSSEIIV (207 aa)) is small GTPase-like. GTP-binding positions include 62–67 (TGVGKS) and 173–176 (TKFD).

It belongs to the small GTPase superfamily. Rab family.

The protein resides in the cytoplasm. It localises to the cytoskeleton. The protein localises to the cilium basal body. Functionally, potential effector of the planar cell polarity signaling pathway. Plays a role in targeted membrane trafficking most probably at the level of vesicle fusion with membranes. Involved in cilium biogenesis by regulating the transport of cargo proteins to the basal body and to the apical tips of cilia. More generally involved in exocytosis in secretory cells. This is Ciliogenesis and planar polarity effector 2 (cplane2) from Danio rerio (Zebrafish).